We begin with the raw amino-acid sequence, 662 residues long: Transketolase (662 aa).

Residue H28 coordinates substrate. Residues H68 and 115 to 117 (GPL) contribute to the thiamine diphosphate site. Position 156 (D156) interacts with Mg(2+). The thiamine diphosphate site is built by G157 and N186. Mg(2+)-binding residues include N186 and I188. Substrate is bound by residues H261, R356, and S383. H261 lines the thiamine diphosphate pocket. The active-site Proton donor is E410. F436 lines the thiamine diphosphate pocket. Residues H460, D468, and R519 each contribute to the substrate site.

The protein belongs to the transketolase family. As to quaternary structure, homodimer. Mg(2+) is required as a cofactor. It depends on Ca(2+) as a cofactor. Mn(2+) serves as cofactor. Requires Co(2+) as cofactor. The cofactor is thiamine diphosphate.

It catalyses the reaction D-sedoheptulose 7-phosphate + D-glyceraldehyde 3-phosphate = aldehydo-D-ribose 5-phosphate + D-xylulose 5-phosphate. It participates in carbohydrate biosynthesis; Calvin cycle. It functions in the pathway carbohydrate degradation; pentose phosphate pathway. Functionally, catalyzes the transfer of a two-carbon ketol group from a ketose donor to an aldose acceptor, via a covalent intermediate with the cofactor thiamine pyrophosphate. The protein is Transketolase (tkt) of Staphylococcus epidermidis (strain ATCC 35984 / DSM 28319 / BCRC 17069 / CCUG 31568 / BM 3577 / RP62A).